The sequence spans 308 residues: Ribosomal RNA small subunit methyltransferase H (308 aa).

Residues Gly-35–His-37, Asp-54, Phe-80, Asp-101, and Gln-108 each bind S-adenosyl-L-methionine.

Belongs to the methyltransferase superfamily. RsmH family.

The protein localises to the cytoplasm. The enzyme catalyses cytidine(1402) in 16S rRNA + S-adenosyl-L-methionine = N(4)-methylcytidine(1402) in 16S rRNA + S-adenosyl-L-homocysteine + H(+). Functionally, specifically methylates the N4 position of cytidine in position 1402 (C1402) of 16S rRNA. The polypeptide is Ribosomal RNA small subunit methyltransferase H (Mycoplasma pneumoniae (strain ATCC 29342 / M129 / Subtype 1) (Mycoplasmoides pneumoniae)).